A 634-amino-acid chain; its full sequence is Knob-associated histidine-rich protein (634 aa).

The N-terminal stretch at 1 to 34 is a signal peptide; it reads MKSFKNKNTLRRKKAFPVFTKILLVSFLVWVLKC. A glycan (N-linked (GlcNAc...) asparagine) is linked at Asn-42. Basic residues predominate over residues 57-87; it reads AQKQHEHHHHHHHQHQHQHQAPHQAHHHHHH. Disordered stretches follow at residues 57 to 143 and 347 to 634; these read AQKQ…QVFR and SSVN…GCCG. The span at 95-104 shows a compositional bias: low complexity; sequence PQVHQQVHGQ. Residues 108–117 are compositionally biased toward basic residues; it reads HHHHHHHHHQ. 2 stretches are compositionally biased toward basic and acidic residues: residues 354 to 375 and 396 to 405; these read KHGDEKHHSSKKHEGNDGEGEK and KDNEDAESVK. The span at 406–422 shows a compositional bias: basic residues; that stretch reads SKKHKSHDCEKKKSKKH. Composition is skewed to basic and acidic residues over residues 423 to 444 and 453 to 493; these read KDNEDAESVKSKKSVKEKGEKH and KTNE…KKVD. A compositionally biased stretch (polar residues) spans 494-505; the sequence is STSADNKSTNAA. Over residues 509 to 520 the composition is skewed to basic and acidic residues; it reads AKDKTQGGKTDK. A run of 4 repeats spans residues 540-549, 550-559, 560-569, and 570-579. The tract at residues 540 to 580 is 4 X 10 AA tandem repeats of [TS]-[KE]-[GE]-A-T-K-[EG]-A-S-T; it reads TKGATKEASTSKEATKEASTSKGATKEASTTEGATKGASTT. Residues 567-591 show a composition bias toward low complexity; that stretch reads ASTTEGATKGASTTAGSTTGATTGA. A compositionally biased stretch (polar residues) spans 605–620; it reads AANNGEQVMSRGQAQL. A compositionally biased stretch (basic residues) spans 625 to 634; sequence KKKKKRGCCG.

The protein localises to the secreted. Functionally, KAHRP might mimick human histidine-rich glycoproteins to anchor host thrombospondin or a parasite analog in a binding complex with the endothelial cell receptor. This is Knob-associated histidine-rich protein from Plasmodium falciparum (isolate FCR-3 / Gambia).